The following is a 473-amino-acid chain: Ribosomal protein uS12 methylthiotransferase RimO (473 aa).

One can recognise an MTTase N-terminal domain in the interval 30 to 141 (ASVAVLHLGC…IVQIIERVER (112 aa)). Residues C39, C75, C104, C179, C183, and C186 each coordinate [4Fe-4S] cluster. The 230-residue stretch at 165-394 (TTHAPVAYLR…MQVQQGITFR (230 aa)) folds into the Radical SAM core domain. The TRAM domain occupies 397 to 463 (REQVGRVVPV…PYDLFGQVVA (67 aa)).

Belongs to the methylthiotransferase family. RimO subfamily. The cofactor is [4Fe-4S] cluster.

Its subcellular location is the cytoplasm. It carries out the reaction L-aspartate(89)-[ribosomal protein uS12]-hydrogen + (sulfur carrier)-SH + AH2 + 2 S-adenosyl-L-methionine = 3-methylsulfanyl-L-aspartate(89)-[ribosomal protein uS12]-hydrogen + (sulfur carrier)-H + 5'-deoxyadenosine + L-methionine + A + S-adenosyl-L-homocysteine + 2 H(+). Functionally, catalyzes the methylthiolation of an aspartic acid residue of ribosomal protein uS12. This chain is Ribosomal protein uS12 methylthiotransferase RimO, found in Synechococcus sp. (strain JA-2-3B'a(2-13)) (Cyanobacteria bacterium Yellowstone B-Prime).